We begin with the raw amino-acid sequence, 360 residues long: NAD(P)H-quinone oxidoreductase subunit 1, chloroplastic (360 aa).

The next 8 membrane-spanning stretches (helical) occupy residues tryptophan 29–valine 49, isoleucine 96–valine 116, isoleucine 128–methionine 148, alanine 166–leucine 186, isoleucine 204–leucine 224, glycine 255–leucine 277, isoleucine 297–leucine 317, and leucine 333–alanine 353.

This sequence belongs to the complex I subunit 1 family. As to quaternary structure, NDH is composed of at least 16 different subunits, 5 of which are encoded in the nucleus.

The protein resides in the plastid. It localises to the chloroplast thylakoid membrane. The enzyme catalyses a plastoquinone + NADH + (n+1) H(+)(in) = a plastoquinol + NAD(+) + n H(+)(out). The catalysed reaction is a plastoquinone + NADPH + (n+1) H(+)(in) = a plastoquinol + NADP(+) + n H(+)(out). Its function is as follows. NDH shuttles electrons from NAD(P)H:plastoquinone, via FMN and iron-sulfur (Fe-S) centers, to quinones in the photosynthetic chain and possibly in a chloroplast respiratory chain. The immediate electron acceptor for the enzyme in this species is believed to be plastoquinone. Couples the redox reaction to proton translocation, and thus conserves the redox energy in a proton gradient. This Chlorokybus atmophyticus (Soil alga) protein is NAD(P)H-quinone oxidoreductase subunit 1, chloroplastic.